A 209-amino-acid chain; its full sequence is Ribonuclease HII (209 aa).

An RNase H type-2 domain is found at 20 to 209 (QLEIGIDEVG…KSFLTKLNLI (190 aa)). A divalent metal cation contacts are provided by Asp-26, Glu-27, and Asp-122.

This sequence belongs to the RNase HII family. Mn(2+) is required as a cofactor. Mg(2+) serves as cofactor.

Its subcellular location is the cytoplasm. The catalysed reaction is Endonucleolytic cleavage to 5'-phosphomonoester.. Its function is as follows. Endonuclease that specifically degrades the RNA of RNA-DNA hybrids. This Prochlorococcus marinus (strain MIT 9515) protein is Ribonuclease HII.